We begin with the raw amino-acid sequence, 600 residues long: Forkhead box protein O (600 aa).

Thr-49 is modified (phosphothreonine; by PKB/AKT1). Ser-80 bears the Phosphoserine mark. A DNA-binding region (fork-head) is located at residues 100–206 (WGNLSYADLI…ETSRYEKRRG (107 aa)). 4 disordered regions span residues 187-210 (KSVR…RAKK), 222-283 (GLND…LEPD), 319-364 (QQGF…TPGY), and 580-600 (LNAR…SWVH). Ser-195 bears the Phosphoserine; by PKB/AKT1 mark. Composition is skewed to polar residues over residues 226 to 235 (ATPSPSSSVS) and 261 to 270 (RASSNASSCG). Ser-264 is modified (phosphoserine; by PKB/AKT1). Residues Ser-267, Ser-268, and Ser-273 each carry the phosphoserine modification. The segment covering 330–342 (TQPPPPPYQPPQP) has biased composition (pro residues). The span at 343–354 (QQQQQQGQQPSP) shows a compositional bias: low complexity.

Interacts with melt.

It is found in the cytoplasm. It localises to the nucleus. Transcription factor involved in the regulation of the insulin signaling pathway. Consistently activates both the downstream target Thor\d4EBP and the feedback control target InR. Involved in negative regulation of the cell cycle, modulating cell growth and proliferation. In response to cellular stresses, such as nutrient deprivation or increased levels of reactive oxygen species, foxo is activated and inhibits growth through the action of target genes such as Thor. Foxo activated in the adult fat body can regulate lifespan in adults; an insulin peptide itself may function as one secondary messenger of insulin-regulated aging. Also regulates Lip4, homolog of human acid lipases, thereby acting as a key modulator of lipid metabolism by insulin signaling and integrates insulin responses to glucose and lipid homeostasis. In Drosophila ananassae (Fruit fly), this protein is Forkhead box protein O.